The primary structure comprises 83 residues: Mu-theraphotoxin-Hhn2b 3 (83 aa).

Positions 1–21 (MKASMFLALAGLVLLFVVCYA) are cleaved as a signal peptide. The propeptide occupies 22 to 48 (SESEEKEFPRELISKIFAVDDFKGEVR). 3 cysteine pairs are disulfide-bonded: Cys50–Cys65, Cys57–Cys70, and Cys64–Cys77. The residue at position 81 (Leu81) is a Leucine amide.

This sequence belongs to the neurotoxin 10 (Hwtx-1) family. 14 (Hntx-1) subfamily. As to quaternary structure, monomer. As to expression, expressed by the venom gland.

The protein resides in the secreted. In terms of biological role, weakly blocks the rat SCN2A/SCN1B (Nav1.2/beta-1) sodium channel (IC(50)=68 uM) and the insect sodium channel para/tipE (IC(50)=4.3 uM), without altering the activation or inactivation kinetics (depressant toxin). This chain is Mu-theraphotoxin-Hhn2b 3, found in Cyriopagopus hainanus (Chinese bird spider).